The sequence spans 205 residues: Fibrillarin-like rRNA/tRNA 2'-O-methyltransferase (205 aa).

S-adenosyl-L-methionine-binding positions include 60–61 (ST), 76–77 (EF), 101–102 (DA), and 121–124 (DIAQ).

Belongs to the methyltransferase superfamily. Fibrillarin family. Interacts with nop5. Component of box C/D small ribonucleoprotein (sRNP) particles that contain rpl7ae, FlpA and nop5, plus a guide RNA.

Involved in pre-rRNA and tRNA processing. Utilizes the methyl donor S-adenosyl-L-methionine to catalyze the site-specific 2'-hydroxyl methylation of ribose moieties in rRNA and tRNA. Site specificity is provided by a guide RNA that base pairs with the substrate. Methylation occurs at a characteristic distance from the sequence involved in base pairing with the guide RNA. This Methanospirillum hungatei JF-1 (strain ATCC 27890 / DSM 864 / NBRC 100397 / JF-1) protein is Fibrillarin-like rRNA/tRNA 2'-O-methyltransferase.